The sequence spans 286 residues: Carbohydrate-binding domain-containing protein Cthe_2159 (286 aa).

The first 20 residues, 1 to 20, serve as a signal peptide directing secretion; the sequence is MSIKKLILAASILTTLALTG. Cys21 carries N-palmitoyl cysteine lipidation. Cys21 is lipidated: S-diacylglycerol cysteine. The polygalacturonic acid-binding stretch occupies residues 124 to 225; sequence GKDNVLTDAE…GIKVENTEEP (102 aa). Positions 152, 153, 154, 177, 178, 215, 243, 244, and 247 each coordinate Ca(2+).

In terms of assembly, monomer.

Its subcellular location is the cell membrane. Binds cellulosic and pectic substrates. Displays no enzyme activity (in vitro). This is Carbohydrate-binding domain-containing protein Cthe_2159 from Acetivibrio thermocellus (strain ATCC 27405 / DSM 1237 / JCM 9322 / NBRC 103400 / NCIMB 10682 / NRRL B-4536 / VPI 7372) (Clostridium thermocellum).